We begin with the raw amino-acid sequence, 667 residues long: Sterile alpha motif domain-containing protein 15 (667 aa).

Acidic residues predominate over residues 1–18 (MAEVPEDYDSGPDEDGEP). 2 disordered regions span residues 1–108 (MAEV…KSER) and 147–424 (SAME…IKSK). 4 stretches are compositionally biased toward basic and acidic residues: residues 19 to 53 (ESER…HEPQ), 84 to 93 (IAKESKRDVP), 187 to 196 (ESLRVQHEET), and 228 to 266 (TKPD…KSSE). The span at 268-277 (AGLEPPEETQ) shows a compositional bias: acidic residues. Basic and acidic residues-rich tracts occupy residues 284 to 314 (MQRK…KSTD), 322 to 338 (EEIK…KPNE), 346 to 364 (EMMK…EEKN), and 381 to 422 (PRVE…EPIK). The 64-residue stretch at 538-601 (WDPEKVAEWI…SRHTRELLEI (64 aa)) folds into the SAM domain.

The protein is Sterile alpha motif domain-containing protein 15 (SAMD15) of Macaca fascicularis (Crab-eating macaque).